The sequence spans 103 residues: Small ribosomal subunit protein uS10 (103 aa).

This sequence belongs to the universal ribosomal protein uS10 family. As to quaternary structure, part of the 30S ribosomal subunit.

Involved in the binding of tRNA to the ribosomes. This Magnetococcus marinus (strain ATCC BAA-1437 / JCM 17883 / MC-1) protein is Small ribosomal subunit protein uS10.